Consider the following 926-residue polypeptide: Peripheral plasma membrane protein CASK (926 aa).

Residues Tyr-12 to Leu-276 form the Protein kinase domain. Residues Ile-18–Val-26 and Lys-41 contribute to the ATP site. Position 51 is a phosphoserine (Ser-51). Residue Asp-141 is part of the active site. Phosphoserine; by autocatalysis occurs at positions 151 and 155. Thr-182 bears the Phosphothreonine mark. The interval Lys-305 to His-315 is calmodulin-binding. Ser-313 is modified (phosphoserine). 2 consecutive L27 domains span residues Ala-343 to Ile-398 and Pro-402 to Glu-455. Residues Met-482 to Ala-909 are required for interaction with NRXN1 (via C-terminal tail). A PDZ domain is found at Leu-490–Tyr-571. Ser-570 and Tyr-571 each carry phosphoserine. A disordered region spans residues Gln-574–Pro-610. One can recognise an SH3 domain in the interval Gly-612 to Val-682. The 173-residue stretch at Arg-739–Glu-911 folds into the Guanylate kinase-like domain.

This sequence in the N-terminal section; belongs to the protein kinase superfamily. CAMK Ser/Thr protein kinase family. CaMK subfamily. The protein belongs to the MAGUK family. CASK and LIN7 form a tripartite complex with CASKIN1. Component of the brain-specific heterotrimeric complex (LIN-10-LIN-2-LIN-7 complex) composed of at least APBA1, CASK, and LIN7, which associates with the motor protein KIF17 to transport vesicles along microtubules. Forms a heterotrimeric complex with DLG1 and LIN7B via their L27 domains. Identified in a complex with ACTN4, IQGAP1, MAGI2, NPHS1, SPTAN1 and SPTBN1. Part of a complex containing CASK, TBR1 and TSPYL2. Interacts with WHRN. Interacts (via the PDZ, SH3 and guanylate kinase-like domains) with NRXN1 (via C-terminus). Interacts with CASKIN1, APBA1, LIN7(A/B/C), and L27 domain of DLG1 and isoform 2 of DLG4. Interacts with FCHSD2. Interacts with KIRREL3. Interacts with TBR1. Interacts with TSPYL2. It depends on Unlike other protein kinases, does not require a divalent cation such as magnesium for catalytic activity. as a cofactor.

Its subcellular location is the nucleus. It is found in the cytoplasm. It localises to the cell membrane. It catalyses the reaction L-seryl-[protein] + ATP = O-phospho-L-seryl-[protein] + ADP + H(+). It carries out the reaction L-threonyl-[protein] + ATP = O-phospho-L-threonyl-[protein] + ADP + H(+). Differs from archetypal CaMK members in that the kinase domain exhibits a constitutively active conformation and the autoinhibitory region does not engage in direct contact with the ATP-binding cleft, although it still binds Ca(2+)/CAM. Functionally, multidomain scaffolding Mg(2+)-independent protein kinase that catalyzes the phosphotransfer from ATP to proteins such as NRXN1, and plays a role in synaptic transmembrane protein anchoring and ion channel trafficking. Contributes to neural development and regulation of gene expression via interaction with the transcription factor TBR1. Binds to cell-surface proteins, including amyloid precursor protein, neurexins, and syndecans. May mediate a link between the extracellular matrix and the actin cytoskeleton via its interaction with syndecan and with the actin/spectrin-binding protein 4.1. Component of the LIN-10-LIN-2-LIN-7 complex, which associates with the motor protein KIF17 to transport vesicles containing N-methyl-D-aspartate (NMDA) receptor subunit NR2B along microtubules. The sequence is that of Peripheral plasma membrane protein CASK from Mus musculus (Mouse).